Consider the following 134-residue polypeptide: Cytochrome b (134 aa).

Helical transmembrane passes span 33–53, 77–98, and 113–133; these read FGSL…FLAM, WILR…FLHV, and WNIG…GYVL. Heme b contacts are provided by His-83 and His-97.

It belongs to the cytochrome b family. In terms of assembly, the cytochrome bc1 complex contains 11 subunits: 3 respiratory subunits (MT-CYB, CYC1 and UQCRFS1), 2 core proteins (UQCRC1 and UQCRC2) and 6 low-molecular weight proteins (UQCRH/QCR6, UQCRB/QCR7, UQCRQ/QCR8, UQCR10/QCR9, UQCR11/QCR10 and a cleavage product of UQCRFS1). This cytochrome bc1 complex then forms a dimer. It depends on heme b as a cofactor.

It is found in the mitochondrion inner membrane. Functionally, component of the ubiquinol-cytochrome c reductase complex (complex III or cytochrome b-c1 complex) that is part of the mitochondrial respiratory chain. The b-c1 complex mediates electron transfer from ubiquinol to cytochrome c. Contributes to the generation of a proton gradient across the mitochondrial membrane that is then used for ATP synthesis. The sequence is that of Cytochrome b (MT-CYB) from Rhinolophus hipposideros (Lesser horseshoe bat).